The primary structure comprises 275 residues: Tropinone reductase-like 2 (275 aa).

17–41 contacts NAD(+); sequence IITGGASGIGACTAELFHENGAKVV. Position 150 (Ser150) interacts with substrate. Tyr163 serves as the catalytic Proton acceptor.

It belongs to the short-chain dehydrogenases/reductases (SDR) family.

Functionally, has no tropinone reductase activity. The chain is Tropinone reductase-like 2 from Erythroxylum coca (Coca plant).